We begin with the raw amino-acid sequence, 412 residues long: Putative competence-damage inducible protein (412 aa).

The protein belongs to the CinA family.

This Bacillus cereus (strain B4264) protein is Putative competence-damage inducible protein.